Consider the following 592-residue polypeptide: Ferric-chelate reductase 1 (592 aa).

Residues 2–22 traverse the membrane as a helical segment; the sequence is AVSGFTLGTCILLLHISYVAN. Residues 13 to 179 enclose the Reelin domain; that stretch reads LLLHISYVAN…FTTPKATVVP (167 aa). 3 N-linked (GlcNAc...) asparagine glycosylation sites follow: Asn-138, Asn-308, and Asn-321. The DOMON domain occupies 216–331; sequence EASCVFLSFT…TSYYIFLADG (116 aa). The Cytochrome b561 domain occupies 335-534; the sequence is DGRIYKHSQQ…VGTEVVLEVH (200 aa). The chain crosses the membrane as a helical span at residues 372-392; sequence VHGALMFVAWMTTVSIGVLVA. His-373 and His-414 together coordinate heme b. The next 2 helical transmembrane spans lie at 415 to 435 and 446 to 466; these read RMLM…PFIY and HPYL…LAVF. Residues His-446 and His-482 each coordinate heme b. 3 consecutive transmembrane segments (helical) span residues 491-511, 515-535, and 569-589; these read IIAV…LPDS, YAMT…EVHA, and AVLA…LSAI.

The protein belongs to the FRRS1 family. Heme b is required as a cofactor.

Its subcellular location is the membrane. Functionally, ferric-chelate reductases reduce Fe(3+) to Fe(2+) before its transport from the endosome to the cytoplasm. This chain is Ferric-chelate reductase 1 (FRRS1), found in Homo sapiens (Human).